Here is a 213-residue protein sequence, read N- to C-terminus: GTP cyclohydrolase 1 (213 aa).

Zn(2+) is bound by residues Cys104, His107, and Cys175.

This sequence belongs to the GTP cyclohydrolase I family. As to quaternary structure, toroid-shaped homodecamer, composed of two pentamers of five dimers.

The enzyme catalyses GTP + H2O = 7,8-dihydroneopterin 3'-triphosphate + formate + H(+). It functions in the pathway cofactor biosynthesis; 7,8-dihydroneopterin triphosphate biosynthesis; 7,8-dihydroneopterin triphosphate from GTP: step 1/1. The polypeptide is GTP cyclohydrolase 1 (Brucella anthropi (strain ATCC 49188 / DSM 6882 / CCUG 24695 / JCM 21032 / LMG 3331 / NBRC 15819 / NCTC 12168 / Alc 37) (Ochrobactrum anthropi)).